Reading from the N-terminus, the 546-residue chain is CTP synthase (546 aa).

The tract at residues 1 to 269 (MRSKKTKFIF…DERLAEVLNI (269 aa)) is amidoligase domain. Ser17 is a CTP binding site. Residue Ser17 coordinates UTP. Residues 18–23 (SLGKGL) and Asp75 contribute to the ATP site. Mg(2+)-binding residues include Asp75 and Glu143. Residues 150-152 (DIE), 190-195 (KTKPTQ), and Lys226 contribute to the CTP site. Residues 190-195 (KTKPTQ) and Lys226 contribute to the UTP site. The region spanning 295 to 537 (RIAIVGKYVN…IRAALAQRDA (243 aa)) is the Glutamine amidotransferase type-1 domain. Gly357 lines the L-glutamine pocket. Residue Cys384 is the Nucleophile; for glutamine hydrolysis of the active site. L-glutamine is bound by residues 385-388 (LGLQ), Glu408, and Arg465. Catalysis depends on residues His510 and Glu512.

The protein belongs to the CTP synthase family. Homotetramer.

The catalysed reaction is UTP + L-glutamine + ATP + H2O = CTP + L-glutamate + ADP + phosphate + 2 H(+). It catalyses the reaction L-glutamine + H2O = L-glutamate + NH4(+). The enzyme catalyses UTP + NH4(+) + ATP = CTP + ADP + phosphate + 2 H(+). The protein operates within pyrimidine metabolism; CTP biosynthesis via de novo pathway; CTP from UDP: step 2/2. Its activity is regulated as follows. Allosterically activated by GTP, when glutamine is the substrate; GTP has no effect on the reaction when ammonia is the substrate. The allosteric effector GTP functions by stabilizing the protein conformation that binds the tetrahedral intermediate(s) formed during glutamine hydrolysis. Inhibited by the product CTP, via allosteric rather than competitive inhibition. Catalyzes the ATP-dependent amination of UTP to CTP with either L-glutamine or ammonia as the source of nitrogen. Regulates intracellular CTP levels through interactions with the four ribonucleotide triphosphates. The sequence is that of CTP synthase from Myxococcus xanthus (strain DK1622).